We begin with the raw amino-acid sequence, 345 residues long: Putative pyridoxal reductase (345 aa).

The active-site Proton donor is Tyr60.

The protein belongs to the aldo/keto reductase family.

The protein resides in the cytoplasm. It localises to the nucleus. The catalysed reaction is pyridoxine + NADP(+) = pyridoxal + NADPH + H(+). The protein operates within cofactor degradation; B6 vitamer degradation; pyridoxal from pyridoxine (dehydrogenase route): step 1/1. Its function is as follows. Catalyzes the reduction of pyridoxal (PL) with NADPH and oxidation of pyridoxine (PN) with NADP(+). This is Putative pyridoxal reductase from Saccharomyces cerevisiae (strain ATCC 204508 / S288c) (Baker's yeast).